The following is a 64-amino-acid chain: Large ribosomal subunit protein bL33 (64 aa).

Over residues 16–25 the composition is skewed to basic and acidic residues; sequence EARTSSEPRR. The disordered stretch occupies residues 16–41; that stretch reads EARTSSEPRRSNGVSRYTTEKNKRNT.

Belongs to the bacterial ribosomal protein bL33 family.

In Prochlorococcus marinus subsp. pastoris (strain CCMP1986 / NIES-2087 / MED4), this protein is Large ribosomal subunit protein bL33.